The following is a 574-amino-acid chain: Amino-acid acetyltransferase, mitochondrial (574 aa).

A mitochondrion-targeting transit peptide spans 1-13 (MWRRIFAHGLKYD). Residues 392 to 560 (KGAKPSNNSP…KRLREFMRSV (169 aa)) form the N-acetyltransferase domain.

This sequence belongs to the acetyltransferase family. In terms of assembly, interacts with the acetylglutamate kinase chain of AGR5,6.

The protein localises to the mitochondrion. It catalyses the reaction L-glutamate + acetyl-CoA = N-acetyl-L-glutamate + CoA + H(+). It functions in the pathway amino-acid biosynthesis; L-arginine biosynthesis; N(2)-acetyl-L-ornithine from L-glutamate: step 1/4. Its activity is regulated as follows. Feedback inhibition by L-arginine. Its function is as follows. N-acetylglutamate synthase involved in arginine biosynthesis. This is Amino-acid acetyltransferase, mitochondrial (ARG2) from Saccharomyces cerevisiae (strain YJM789) (Baker's yeast).